The following is a 357-amino-acid chain: IGF-like family receptor 1 (357 aa).

A signal peptide spans 1–22; sequence MGPLRLLPTAVLLLAQAAPWEA. Residues 23 to 160 are Extracellular-facing; it reads SQHCGRLEYW…HKAPQQAWPS (138 aa). Residues 100-147 are disordered; it reads IPSGSRGGTGRPCREPVPNKEPCPLTPGKSSILSSQEPSSPGIPSVSW. Positions 129-139 are enriched in low complexity; that stretch reads SSILSSQEPSS. Residues 161–181 form a helical membrane-spanning segment; that stretch reads LSFALFLVLVLLVTSAIILLA. Topologically, residues 182 to 357 are cytoplasmic; sequence LQRHHRRLDQ…KLGSSGACLA (176 aa).

The protein localises to the cell membrane. Its function is as follows. Probable cell membrane receptor for the IGF-like family protein IGFL. The protein is IGF-like family receptor 1 (IGFLR1) of Bos taurus (Bovine).